Consider the following 404-residue polypeptide: DNA gyrase subunit B (404 aa).

One can recognise a Toprim domain in the interval 321–404 (SEIYIVEGDS…VIIMTDADVD (84 aa)). 3 residues coordinate Mg(2+): E327, D400, and D402.

This sequence belongs to the type II topoisomerase GyrB family. In terms of assembly, heterotetramer, composed of two GyrA and two GyrB chains. In the heterotetramer, GyrA contains the active site tyrosine that forms a transient covalent intermediate with DNA, while GyrB binds cofactors and catalyzes ATP hydrolysis. Mg(2+) is required as a cofactor. It depends on Mn(2+) as a cofactor. Ca(2+) serves as cofactor.

It is found in the cytoplasm. It catalyses the reaction ATP-dependent breakage, passage and rejoining of double-stranded DNA.. Its function is as follows. A type II topoisomerase that negatively supercoils closed circular double-stranded (ds) DNA in an ATP-dependent manner to modulate DNA topology and maintain chromosomes in an underwound state. Negative supercoiling favors strand separation, and DNA replication, transcription, recombination and repair, all of which involve strand separation. Also able to catalyze the interconversion of other topological isomers of dsDNA rings, including catenanes and knotted rings. Type II topoisomerases break and join 2 DNA strands simultaneously in an ATP-dependent manner. In Bacillus mycoides, this protein is DNA gyrase subunit B (gyrB).